The sequence spans 784 residues: ATP-dependent zinc metalloprotease FTSH 9, chloroplastic/mitochondrial (784 aa).

Low complexity-rich tracts occupy residues 1–12 (MSALQASLLLRP), 24–34 (PLPSSSASFPR), and 42–53 (PLPLRALASEGP). Residues 1 to 47 (MSALQASLLLRPLPSPLPPRRRLPLPSSSASFPRAGHHRRLPLPLRA) constitute a chloroplast and mitochondrion transit peptide. The segment at 1–71 (MSALQASLLL…DPPPPELPAA (71 aa)) is disordered. A compositionally biased stretch (pro residues) spans 54-69 (QPAPSPAPDPPPPELP). The next 2 membrane-spanning stretches (helical) occupy residues 104 to 124 (WVLA…DWVV) and 267 to 287 (IFST…GAAA). 368–375 (GSPGTGKT) contributes to the ATP binding site. His601 contacts Zn(2+). Glu602 is a catalytic residue. The Zn(2+) site is built by His605 and Asp679.

In the N-terminal section; belongs to the AAA ATPase family. It in the C-terminal section; belongs to the peptidase M41 family. It depends on Zn(2+) as a cofactor.

The protein localises to the mitochondrion membrane. Its subcellular location is the plastid. It is found in the chloroplast thylakoid membrane. In terms of biological role, probable ATP-dependent zinc metallopeptidase. The protein is ATP-dependent zinc metalloprotease FTSH 9, chloroplastic/mitochondrial (FTSH9) of Oryza sativa subsp. japonica (Rice).